The chain runs to 332 residues: Malate dehydrogenase, cytoplasmic (332 aa).

NAD(+)-binding positions include 16–17 (QI), Asp43, and Gly90. Arg99 is a binding site for oxaloacetate. Residues Gln113 and Asn132 each coordinate NAD(+). Asn132, Arg163, His188, and Ser243 together coordinate oxaloacetate. The active-site Proton acceptor is His188.

This sequence belongs to the LDH/MDH superfamily. MDH type 2 family. As to quaternary structure, homodimer.

Its subcellular location is the cytoplasm. It catalyses the reaction (S)-malate + NAD(+) = oxaloacetate + NADH + H(+). In Mesembryanthemum crystallinum (Common ice plant), this protein is Malate dehydrogenase, cytoplasmic (MDH).